The chain runs to 396 residues: 1-deoxy-D-xylulose 5-phosphate reductoisomerase (396 aa).

Threonine 13, glycine 14, serine 15, isoleucine 16, and asparagine 127 together coordinate NADPH. Lysine 128 contributes to the 1-deoxy-D-xylulose 5-phosphate binding site. NADPH is bound at residue glutamate 129. Residue aspartate 153 participates in Mn(2+) binding. 4 residues coordinate 1-deoxy-D-xylulose 5-phosphate: serine 154, glutamate 155, serine 184, and histidine 207. Glutamate 155 provides a ligand contact to Mn(2+). NADPH is bound at residue glycine 213. 1-deoxy-D-xylulose 5-phosphate-binding residues include serine 220, asparagine 225, lysine 226, and glutamate 229. Glutamate 229 contributes to the Mn(2+) binding site.

Belongs to the DXR family. The cofactor is Mg(2+). Mn(2+) serves as cofactor.

The catalysed reaction is 2-C-methyl-D-erythritol 4-phosphate + NADP(+) = 1-deoxy-D-xylulose 5-phosphate + NADPH + H(+). It functions in the pathway isoprenoid biosynthesis; isopentenyl diphosphate biosynthesis via DXP pathway; isopentenyl diphosphate from 1-deoxy-D-xylulose 5-phosphate: step 1/6. In terms of biological role, catalyzes the NADPH-dependent rearrangement and reduction of 1-deoxy-D-xylulose-5-phosphate (DXP) to 2-C-methyl-D-erythritol 4-phosphate (MEP). This chain is 1-deoxy-D-xylulose 5-phosphate reductoisomerase, found in Pseudomonas syringae pv. syringae (strain B728a).